The sequence spans 308 residues: Ribosomal RNA small subunit methyltransferase H (308 aa).

Residues 36 to 38 (GGH), D55, F86, D103, and Q110 contribute to the S-adenosyl-L-methionine site.

The protein belongs to the methyltransferase superfamily. RsmH family.

The protein localises to the cytoplasm. The enzyme catalyses cytidine(1402) in 16S rRNA + S-adenosyl-L-methionine = N(4)-methylcytidine(1402) in 16S rRNA + S-adenosyl-L-homocysteine + H(+). Functionally, specifically methylates the N4 position of cytidine in position 1402 (C1402) of 16S rRNA. This chain is Ribosomal RNA small subunit methyltransferase H, found in Helicobacter pylori (strain P12).